A 342-amino-acid polypeptide reads, in one-letter code: Ribosomal RNA small subunit methyltransferase C (342 aa).

Belongs to the methyltransferase superfamily. RsmC family. In terms of assembly, monomer.

The protein localises to the cytoplasm. The enzyme catalyses guanosine(1207) in 16S rRNA + S-adenosyl-L-methionine = N(2)-methylguanosine(1207) in 16S rRNA + S-adenosyl-L-homocysteine + H(+). In terms of biological role, specifically methylates the guanine in position 1207 of 16S rRNA in the 30S particle. This chain is Ribosomal RNA small subunit methyltransferase C, found in Klebsiella pneumoniae subsp. pneumoniae (strain ATCC 700721 / MGH 78578).